Here is a 560-residue protein sequence, read N- to C-terminus: Trans-activating transcriptional regulatory protein (560 aa).

The interval 106–133 is disordered; that stretch reads DSMKRKASELDSDSDSGESSKGKKRVIK.

Belongs to the nucleopolyhedrovirus IE-1 protein family.

Functionally, regulatory transcriptional protein, which trans-activates gene expression from early baculovirus promoters. Can also trans-activate its own promoter, suggesting that it is autoregulated during normal infection of insect cells. This is Trans-activating transcriptional regulatory protein (IE1) from Choristoneura fumiferana nuclear polyhedrosis virus (CfMNPV).